Reading from the N-terminus, the 826-residue chain is Disintegrin and metalloproteinase domain-containing protein 8 (826 aa).

An N-terminal signal peptide occupies residues 1-16; the sequence is MLGLWLLSVLWTPAVA. The Extracellular portion of the chain corresponds to 17-658; that stretch reads PGPPLPHVKQ…VSDEQAASTS (642 aa). N-linked (GlcNAc...) asparagine glycans are attached at residues asparagine 89 and asparagine 260. One can recognise a Peptidase M12B domain in the interval 196–395; the sequence is RYVELYVVAD…PQTGCLTNVP (200 aa). 12 disulfides stabilise this stretch: cysteine 305/cysteine 390, cysteine 346/cysteine 374, cysteine 348/cysteine 357, cysteine 430/cysteine 452, cysteine 443/cysteine 449, cysteine 461/cysteine 481, cysteine 468/cysteine 498, cysteine 493/cysteine 503, cysteine 563/cysteine 615, cysteine 615/cysteine 625, cysteine 619/cysteine 631, and cysteine 633/cysteine 642. Position 329 (histidine 329) interacts with Zn(2+). Glutamate 330 is an active-site residue. 2 residues coordinate Zn(2+): histidine 333 and histidine 339. Residues 403-489 form the Disintegrin domain; it reads GPVCGNLFVE…TCPEDAFQQN (87 aa). The N-linked (GlcNAc...) asparagine glycan is linked to asparagine 431. In terms of domain architecture, EGF-like spans 611–643; it reads RSENCSAKCNNHGVCNHKRECHCHKGWAPPNCV. Asparagine 614 carries an N-linked (GlcNAc...) asparagine glycan. Residues 659–683 traverse the membrane as a helical segment; it reads LPVSVVVVLVILVAAMVIVAGIVIY. Over 684–826 the chain is Cytoplasmic; it reads RKAPRQIQRR…VALKVPIQKR (143 aa). Positions 701–826 are disordered; that stretch reads SGLSNPLFYT…VALKVPIQKR (126 aa). The segment covering 733-748 has biased composition (pro residues); sequence PPRPIVKPKRPPPAPP. Over residues 749 to 763 the composition is skewed to low complexity; sequence GAVSSSPLPVPVYAP.

As to quaternary structure, interacts with FST3. Zn(2+) is required as a cofactor. As to expression, macrophages.

It localises to the membrane. In terms of biological role, possible involvement in extravasation of leukocytes. This chain is Disintegrin and metalloproteinase domain-containing protein 8 (Adam8), found in Mus musculus (Mouse).